The sequence spans 280 residues: Octanoyl-[GcvH]:protein N-octanoyltransferase (280 aa).

A BPL/LPL catalytic domain is found at 40 to 245 (QERGAVLRAW…VLSTVSLLQN (206 aa)). The active-site Acyl-thioester intermediate is the C144.

It belongs to the octanoyltransferase LipL family.

The enzyme catalyses N(6)-octanoyl-L-lysyl-[glycine-cleavage complex H protein] + L-lysyl-[lipoyl-carrier protein] = N(6)-octanoyl-L-lysyl-[lipoyl-carrier protein] + L-lysyl-[glycine-cleavage complex H protein]. Its pathway is protein modification; protein lipoylation via endogenous pathway; protein N(6)-(lipoyl)lysine from octanoyl-[acyl-carrier-protein]. In terms of biological role, catalyzes the amidotransfer (transamidation) of the octanoyl moiety from octanoyl-GcvH to the lipoyl domain of the E2 subunit of lipoate-dependent enzymes. This is Octanoyl-[GcvH]:protein N-octanoyltransferase from Exiguobacterium sp. (strain ATCC BAA-1283 / AT1b).